The sequence spans 547 residues: Mitogen-activated protein kinase 15 (547 aa).

The interval 1 to 20 (MCAAEVDRHVSQRYLIKRRL) is ubiquitin-conjugating. The region spanning 14–305 (YLIKRRLGKG…AEQALQHPYV (292 aa)) is the Protein kinase domain. Residues 20-28 (LGKGAYGIV) and lysine 43 contribute to the ATP site. Residue aspartate 138 is the Proton acceptor of the active site. Position 176 is a phosphothreonine (threonine 176). Positions 176-178 (TEY) match the TXY motif. At tyrosine 178 the chain carries Phosphotyrosine. Residues 266–286 (LDALLPPDTPPEALDLLKRLL) are necessary to interact with ESRRA, to regulate its subcellular localization and to inhibit its transcriptional activity. The segment at 301 to 380 (QHPYVQRFHC…SQRQSLKPGV (80 aa)) is requires for interaction with GABARAP, MAP1LC3B AND GABARAPL1. Residues 370–503 (ASQRQSLKPG…EAPEPRPGRR (134 aa)) are disordered. PXXXP motif repeat units lie at residues 378–382 (PGVLP) and 385–389 (LAETP). PXXXP motif; regulates binding with chromatin and interaction with PCNA repeat units lie at residues 393–397 (RGPKP) and 401–405 (HGHDP). Residues 401–414 (HGHDPEHVEVRRQS) are compositionally biased toward basic and acidic residues. Omega-N-methylarginine is present on arginine 449. The segment covering 454 to 465 (SLTSQAAAQAAN) has biased composition (polar residues). Residues 481-490 (AVGARRVPSR) show a composition bias toward low complexity. The span at 491–500 (LPREAPEPRP) shows a compositional bias: basic and acidic residues.

It belongs to the protein kinase superfamily. CMGC Ser/Thr protein kinase family. MAP kinase subfamily. In terms of assembly, interacts with CSK/c-Src, ABL1, RET and TGFB1I1. Interacts with GABARAP, MAP1LC3B and GABARAPL1; controls, in a kinase-dependent fashion, both basal and starvation-induced autophagy. Interacts with ESRRA; promotes re-localization of ESRRA to the cytoplasm through a XPO1-dependent mechanism then inhibits ESRRA transcriptional activity. Interacts with PCNA; the interaction is chromatin binding- and kinase activity-dependent and prevents MDM2-mediated PCNA destruction by inhibiting the association of PCNA with MDM2. Interacts with DVL2. Interacts with CLIC3; MAPK15 does not phosphorylates CLIC3. Autophosphorylated on Thr-176 and Tyr-178; activates the enzyme. Post-translationally, dephosphorylated by PTPN1. In terms of processing, ubiquitinated. Ubiquitination may allow its tight kinase activity regulation and rapid turnover. May be ubiquitinated by a SCF E3 ligase. Ubiquitously expressed at a weak level. Highest expression is found in testis and to a lower extent in lung.

It localises to the cytoplasm. The protein localises to the cytoskeleton. The protein resides in the cilium basal body. It is found in the cell junction. Its subcellular location is the tight junction. It localises to the microtubule organizing center. The protein localises to the centrosome. The protein resides in the centriole. It is found in the cytoplasmic vesicle. Its subcellular location is the autophagosome. It localises to the golgi apparatus. The protein localises to the nucleus. The protein resides in the spindle. The enzyme catalyses L-seryl-[protein] + ATP = O-phospho-L-seryl-[protein] + ADP + H(+). It carries out the reaction L-threonyl-[protein] + ATP = O-phospho-L-threonyl-[protein] + ADP + H(+). With respect to regulation, activated by threonine and tyrosine phosphorylation. Inhibited by dual specificity phosphatases, such as DUSP1. Phosphorylation and activation in response to DNA damaging agents, serum stimulation. Constitutively activated when phosphorylated on Tyr-178. Activity depends on the relative rates of MAPK15 autophosphorylation and dephosphorylation by PTPN1. In terms of biological role, atypical MAPK protein that regulates several process such as autophagy, ciliogenesis, protein trafficking/secretion and genome integrity, in a kinase activity-dependent manner. Controls both, basal and starvation-induced autophagy throught its interaction with GABARAP, MAP1LC3B and GABARAPL1 leading to autophagosome formation, SQSTM1 degradation and reduced MAP1LC3B inhibitory phosphorylation. Regulates primary cilium formation and the localization of ciliary proteins involved in cilium structure, transport, and signaling. Prevents the relocation of the sugar-adding enzymes from the Golgi to the endoplasmic reticulum, thereby restricting the production of sugar-coated proteins. Upon amino-acid starvation, mediates transitional endoplasmic reticulum site disassembly and inhibition of secretion. Binds to chromatin leading to MAPK15 activation and interaction with PCNA, that which protects genomic integrity by inhibiting MDM2-mediated degradation of PCNA. Regulates DA transporter (DAT) activity and protein expression via activation of RhoA. In response to H(2)O(2) treatment phosphorylates ELAVL1, thus preventing it from binding to the PDCD4 3'UTR and rendering the PDCD4 mRNA accessible to miR-21 and leading to its degradation and loss of protein expression. Also functions in a kinase activity-independent manner as a negative regulator of growth. Phosphorylates in vitro FOS and MBP. During oocyte maturation, plays a key role in the microtubule organization and mei- otic cell cycle progression in oocytes, fertilized eggs, and early embryos. Interacts with ESRRA promoting its re-localization from the nucleus to the cytoplasm and then prevents its transcriptional activity. The chain is Mitogen-activated protein kinase 15 (Mapk15) from Rattus norvegicus (Rat).